A 347-amino-acid polypeptide reads, in one-letter code: Protein NDL3 (347 aa).

Belongs to the NDRG family. As to quaternary structure, interacts with the heterodimers formed by GB1 and GG1, or GB1 and GG2. Interacts with RGS1.

The protein resides in the cytoplasm. In terms of biological role, involved in a signaling pathway that modulates root auxin transport and auxin gradients. Acts partially by positively regulating the auxin carrier PIN2 and AUX1. Acts, together with GB1 as positive regulator of meristem initiation and branching. GB1 and NDL3 positively regulate basipetal inflorescence auxin transport and modulate MAX2 expression in shoots, which regulates organ and lateral meristem formation by the establishment and maintenance of auxin gradients. This Arabidopsis thaliana (Mouse-ear cress) protein is Protein NDL3.